A 276-amino-acid polypeptide reads, in one-letter code: SKA complex subunit 1 homolog (276 aa).

Residues 48–78 (VDVSLTAMEAQLQAVRRRLQEEREAFPKAKK) are a coiled coil.

This sequence belongs to the SKA1 family.

This is SKA complex subunit 1 homolog from Oryza sativa subsp. japonica (Rice).